A 145-amino-acid chain; its full sequence is Arginine repressor (145 aa).

Belongs to the ArgR family.

Its subcellular location is the cytoplasm. Its pathway is amino-acid biosynthesis; L-arginine biosynthesis [regulation]. In terms of biological role, regulates arginine biosynthesis genes. This is Arginine repressor from Streptococcus equi subsp. zooepidemicus (strain H70).